Consider the following 69-residue polypeptide: UPF0346 protein llmg_2280 (69 aa).

The protein belongs to the UPF0346 family.

The polypeptide is UPF0346 protein llmg_2280 (Lactococcus lactis subsp. cremoris (strain MG1363)).